Consider the following 204-residue polypeptide: Shikimate kinase (204 aa).

35-40 (ASGKST) contributes to the ATP binding site. Mg(2+) is bound at residue serine 39. Positions 57, 81, and 103 each coordinate substrate. Arginine 142 provides a ligand contact to ATP. Residue arginine 169 coordinates substrate.

Belongs to the shikimate kinase family. Monomer. Requires Mg(2+) as cofactor.

It localises to the cytoplasm. It catalyses the reaction shikimate + ATP = 3-phosphoshikimate + ADP + H(+). It participates in metabolic intermediate biosynthesis; chorismate biosynthesis; chorismate from D-erythrose 4-phosphate and phosphoenolpyruvate: step 5/7. Functionally, catalyzes the specific phosphorylation of the 3-hydroxyl group of shikimic acid using ATP as a cosubstrate. The chain is Shikimate kinase from Salinibacter ruber (strain DSM 13855 / M31).